The sequence spans 79 residues: Putative defensin-like protein 146 (79 aa).

Positions 1–25 (MMKNQFQLSLIILTFFILLELGVMG) are cleaved as a signal peptide. Intrachain disulfides connect cysteine 35-cysteine 78, cysteine 46-cysteine 66, cysteine 51-cysteine 72, and cysteine 55-cysteine 74.

This sequence belongs to the DEFL family.

It localises to the secreted. The sequence is that of Putative defensin-like protein 146 (LCR9) from Arabidopsis thaliana (Mouse-ear cress).